Consider the following 232-residue polypeptide: Translation initiation factor IF-3 (232 aa).

2 disordered regions span residues 1–21 (MAIQ…RTNR) and 184–232 (LQSQ…AAQR). Low complexity predominate over residues 193-208 (AAAAAAPAAAPAAGAP). Residues 209–222 (APTPAPAPAAPAPA) are compositionally biased toward pro residues. Residues 223–232 (PAAADPAAQR) are compositionally biased toward low complexity.

It belongs to the IF-3 family. As to quaternary structure, monomer.

It is found in the cytoplasm. Its function is as follows. IF-3 binds to the 30S ribosomal subunit and shifts the equilibrium between 70S ribosomes and their 50S and 30S subunits in favor of the free subunits, thus enhancing the availability of 30S subunits on which protein synthesis initiation begins. This is Translation initiation factor IF-3 from Anaeromyxobacter sp. (strain K).